A 117-amino-acid chain; its full sequence is UPF0342 protein GWCH70_0629 (117 aa).

The protein belongs to the UPF0342 family.

This is UPF0342 protein GWCH70_0629 from Geobacillus sp. (strain WCH70).